Reading from the N-terminus, the 388-residue chain is Succinate--CoA ligase [ADP-forming] subunit beta (388 aa).

The ATP-grasp domain occupies 9 to 244; that stretch reads KEIFRSMGVA…LEEEDPKEIE (236 aa). Residues Lys46, 53-55, Glu99, Cys102, and Glu107 each bind ATP; that span reads GRG. Residues Asn199 and Asp213 each coordinate Mg(2+). Substrate is bound by residues Asn264 and 321-323; that span reads GIM.

Belongs to the succinate/malate CoA ligase beta subunit family. As to quaternary structure, heterotetramer of two alpha and two beta subunits. Mg(2+) is required as a cofactor.

It carries out the reaction succinate + ATP + CoA = succinyl-CoA + ADP + phosphate. It catalyses the reaction GTP + succinate + CoA = succinyl-CoA + GDP + phosphate. Its pathway is carbohydrate metabolism; tricarboxylic acid cycle; succinate from succinyl-CoA (ligase route): step 1/1. Functionally, succinyl-CoA synthetase functions in the citric acid cycle (TCA), coupling the hydrolysis of succinyl-CoA to the synthesis of either ATP or GTP and thus represents the only step of substrate-level phosphorylation in the TCA. The beta subunit provides nucleotide specificity of the enzyme and binds the substrate succinate, while the binding sites for coenzyme A and phosphate are found in the alpha subunit. The chain is Succinate--CoA ligase [ADP-forming] subunit beta from Staphylococcus aureus (strain Mu3 / ATCC 700698).